A 184-amino-acid chain; its full sequence is U3 small nucleolar ribonucleoprotein protein IMP3 (184 aa).

An S4 RNA-binding domain is found at 109 to 175 (RRLPTVLLKL…IKRHVLEYNE (67 aa)).

The protein belongs to the universal ribosomal protein uS4 family. Part of the small subunit (SSU) processome, composed of more than 70 proteins and the RNA chaperone small nucleolar RNA (snoRNA) U3. Component of a heterotrimeric complex containing IMP3, IMP4 and MPHOSPH10. Interacts with MPHOSPH10.

It localises to the nucleus. The protein localises to the nucleolus. Its function is as follows. Component of the 60-80S U3 small nucleolar ribonucleoprotein (U3 snoRNP). Required for the early cleavages during pre-18S ribosomal RNA processing. Part of the small subunit (SSU) processome, first precursor of the small eukaryotic ribosomal subunit. During the assembly of the SSU processome in the nucleolus, many ribosome biogenesis factors, an RNA chaperone and ribosomal proteins associate with the nascent pre-rRNA and work in concert to generate RNA folding, modifications, rearrangements and cleavage as well as targeted degradation of pre-ribosomal RNA by the RNA exosome. The polypeptide is U3 small nucleolar ribonucleoprotein protein IMP3 (Homo sapiens (Human)).